Here is a 337-residue protein sequence, read N- to C-terminus: Cathepsin L-like (337 aa).

A signal peptide spans 1–18; the sequence is MNRFILLALVAAVVAVNS. Residues 19–119 constitute a propeptide, activation peptide; that stretch reads AKLSRQIESA…SSFLAPFNVQ (101 aa). N-linked (GlcNAc...) asparagine glycosylation occurs at Asn-108. 3 cysteine pairs are disulfide-bonded: Cys-141/Cys-184, Cys-175/Cys-217, and Cys-276/Cys-326. Residue Cys-144 is part of the active site. Residues His-283 and Asn-304 contribute to the active site.

It belongs to the peptidase C1 family. In terms of tissue distribution, expressed in intestine, pharynx posterior bulb, hypodermis and cuticle (at protein level). Expressed in germ cells, developing oocytes, sheath cells surrounding germ cells and oocytes, and in the eggshell (at protein level).

It localises to the secreted. Its subcellular location is the cytoplasmic granule. The protein localises to the lysosome. The protein resides in the endosome. It is found in the cytoplasmic vesicle. It localises to the phagosome. It carries out the reaction Specificity close to that of papain. As compared to cathepsin B, cathepsin L exhibits higher activity toward protein substrates, but has little activity on Z-Arg-Arg-NHMec, and no peptidyl-dipeptidase activity.. Its function is as follows. Cysteine protease which plays an essential role in the degradation of proteins in lysosomes. During early embryogenesis, maternally required for the proteolytic processing of yolk proteins in platelets, a lysosome-like structure where a slow and controlled degradation of yolk proteins occurs. In the gonad, required for the clearance of apoptotic germ cells in the engulfing cell phagolysosomes. In embryos, required for the degradation of endocytic and autophagic cargos. In embryos, may play a role in the degradation of lipid-containing droplets. Required for larval development. In Caenorhabditis elegans, this protein is Cathepsin L-like.